Reading from the N-terminus, the 709-residue chain is MAQAHIRGSPCPLLPPGRMSWPHGALLLLWLFSPPLRAGGGGVAVTSAAGGGSPPATSCPAACSCSNQASRVICTRRELAEVPASIPVNTRYLNLQENSIQVIRTDTFKHLRHLEILQLSKNLVRKIEVGAFNGLPSLNTLELFDNRLTTVPTQAFEYLSKLRELWLRNNPIESIPSYAFNRVPSLRRLDLGELKRLEYISEAAFEGLVNLRYLNLGMCNLKDIPNLTALVRLEELELSGNRLDLIRPGSFQGLTSLRKLWLMHAQVATIERNAFDDLKSLEELNLSHNNLMSLPHDLFTPLHRLERVHLNHNPWHCNCDVLWLSWWLKETVPSNTTCCARCHAPAGLKGRYIGELDQSHFTCYAPVIVEPPTDLNVTEGMAAELKCRTGTSMTSVNWLTPNGTLMTHGSYRVRISVLHDGTLNFTNVTVQDTGQYTCMVTNSAGNTTASATLNVSAVDPVAAGGPGGGGPGGGGGAGGAGGYTYFTTVTVETLETQPGEEAQQPRGTEKEPPGPTTDGAWGGGRPDAAAPASASTTAPAPRSSRPTEKAFTVPITDVTENALKDLDDVMKTTKIIIGCFVAITFMAAVMLVAFYKLRKQHQLHKHHGPTRTVEIINVEDELPAASAVSVAAAAAVAGGAGVGGDSHLALPALERDHLNHHHYVAAAFKAHYGGNPGGGCGAKGPGLNSIHEPLLFKSGSKENVQETQI.

Positions 1-38 (MAQAHIRGSPCPLLPPGRMSWPHGALLLLWLFSPPLRA) are cleaved as a signal peptide. Residues 50–88 (GGGSPPATSCPAACSCSNQASRVICTRRELAEVPASIPV) enclose the LRRNT domain. LRR repeat units lie at residues 89–110 (NTRY…TFKH), 113–134 (HLEI…AFNG), 137–158 (SLNT…AFEY), 161–182 (KLRE…AFNR), 185–207 (SLRR…AFEG), 210–231 (NLRY…TALV), 232–253 (RLEE…SFQG), 256–277 (SLRK…AFDD), and 280–301 (SLEE…LFTP). N226 is a glycosylation site (N-linked (GlcNAc...) asparagine). N285, N335, N376, N402, N424, N427, N446, and N454 each carry an N-linked (GlcNAc...) asparagine glycan. Positions 313–365 (NPWHCNCDVLWLSWWLKETVPSNTTCCARCHAPAGLKGRYIGELDQSHFTCYA) constitute an LRRCT domain. Residues 366–454 (PVIVEPPTDL…GNTTASATLN (89 aa)) form the Ig-like C2-type domain. C387 and C438 are oxidised to a cystine. The disordered stretch occupies residues 496-552 (TQPGEEAQQPRGTEKEPPGPTTDGAWGGGRPDAAAPASASTTAPAPRSSRPTEKAFT). The span at 528-544 (AAAPASASTTAPAPRSS) shows a compositional bias: low complexity. Residues 575 to 595 (IIIGCFVAITFMAAVMLVAFY) form a helical membrane-spanning segment. S689 bears the Phosphoserine mark.

In terms of assembly, interacts with PTPRF. Interacts with DLG4. Post-translationally, N-glycosylated. O-glycosylated; contains sialic acid.

Its subcellular location is the membrane. The protein resides in the presynaptic cell membrane. In terms of biological role, synaptic adhesion protein. Regulates the formation of excitatory synapses. The trans-synaptic adhesion between LRRC4B and PTPRF regulates the formation of excitatory synapses in a bidirectional manner. The sequence is that of Leucine-rich repeat-containing protein 4B (Lrrc4b) from Mus musculus (Mouse).